A 341-amino-acid polypeptide reads, in one-letter code: Alanine racemase (341 aa).

Lys-33 functions as the Proton acceptor; specific for D-alanine in the catalytic mechanism. N6-(pyridoxal phosphate)lysine is present on Lys-33. Arg-126 contributes to the substrate binding site. The active-site Proton acceptor; specific for L-alanine is the Tyr-236. Residue Met-284 participates in substrate binding.

This sequence belongs to the alanine racemase family. It depends on pyridoxal 5'-phosphate as a cofactor.

The enzyme catalyses L-alanine = D-alanine. It functions in the pathway amino-acid biosynthesis; D-alanine biosynthesis; D-alanine from L-alanine: step 1/1. In terms of biological role, catalyzes the interconversion of L-alanine and D-alanine. The chain is Alanine racemase (alr) from Aquifex pyrophilus.